The following is a 311-amino-acid chain: Ribonuclease Z (311 aa).

Zn(2+) contacts are provided by H61, H63, D65, H66, H148, D216, and H275. D65 functions as the Proton acceptor in the catalytic mechanism.

It belongs to the RNase Z family. Homodimer. Zn(2+) serves as cofactor.

The enzyme catalyses Endonucleolytic cleavage of RNA, removing extra 3' nucleotides from tRNA precursor, generating 3' termini of tRNAs. A 3'-hydroxy group is left at the tRNA terminus and a 5'-phosphoryl group is left at the trailer molecule.. In terms of biological role, zinc phosphodiesterase, which displays some tRNA 3'-processing endonuclease activity. Probably involved in tRNA maturation, by removing a 3'-trailer from precursor tRNA. The sequence is that of Ribonuclease Z from Clostridium novyi (strain NT).